The following is a 520-amino-acid chain: 2-methylcitrate dehydratase, mitochondrial (520 aa).

The transit peptide at 1 to 37 (MRAFRSAANFGAASNIYRKSFTPASIASNRFVSARMS) directs the protein to the mitochondrion.

This sequence belongs to the PrpD family. As to quaternary structure, monomer.

Its subcellular location is the mitochondrion. The enzyme catalyses (2S,3S)-2-methylcitrate = 2-methyl-cis-aconitate + H2O. It functions in the pathway organic acid metabolism; propanoate degradation. Its activity is regulated as follows. Several bivalent metal ions, such as nickel, copper, zinc, mercury, and lead, inhibit the activity to some extent. Inhibited by structural analogs such as citrate, cis-aconitate, isocitrate, 2-methylisocitrate, tricarballylate and fluorocitrate, but not by trans-aconitate or adipate. In terms of biological role, component of the methylcitrate cycle that catalyzes the dehydration of 2-methylcitrate to 2-methyl-cis-aconitate. The methylcitrate cycle is a metabolic pathway for the consumption of propionic acid. This is 2-methylcitrate dehydratase, mitochondrial from Yarrowia lipolytica (strain CLIB 122 / E 150) (Yeast).